The primary structure comprises 369 residues: Putative F-box protein At1g70960 (369 aa).

An F-box domain is found at Asn3–Met54.

In Arabidopsis thaliana (Mouse-ear cress), this protein is Putative F-box protein At1g70960.